Here is a 272-residue protein sequence, read N- to C-terminus: MDKYAVIGNPVEHSLSPVIFQAFEKQTNHSFDYLKIKAPVNGFAAAVKKFHDEGGKGANITLPFKEEAYQLADKRSQEANEAHVASALQFREDGTIYAVNYDGLGLVQDLTRNHNITLTQKSILIVGAGGATRGILGPLLNAAPEKIVIVNRTPSKAHALAKIFHLRGEIQGGGFDELEPMRYDVIIHATSLGHQGKFPPLPDGLIGSQSCCYDLSYGKIASPFLQWAKDQGAKYNFDGLGMLVEHNAAVFYLWFGIYPDTNPVIEMLQAHL.

Residues 14–16 (SLS) and Thr-61 each bind shikimate. The active-site Proton acceptor is Lys-65. Asp-102 contacts shikimate. Residues 127–131 (GAGGA), 151–156 (NRTPSK), and Leu-215 contribute to the NADP(+) site. Tyr-217 contributes to the shikimate binding site. Gly-239 contacts NADP(+).

Belongs to the shikimate dehydrogenase family. Homodimer.

It catalyses the reaction shikimate + NADP(+) = 3-dehydroshikimate + NADPH + H(+). It participates in metabolic intermediate biosynthesis; chorismate biosynthesis; chorismate from D-erythrose 4-phosphate and phosphoenolpyruvate: step 4/7. In terms of biological role, involved in the biosynthesis of the chorismate, which leads to the biosynthesis of aromatic amino acids. Catalyzes the reversible NADPH linked reduction of 3-dehydroshikimate (DHSA) to yield shikimate (SA). The polypeptide is Shikimate dehydrogenase (NADP(+)) (Coxiella burnetii (strain CbuG_Q212) (Coxiella burnetii (strain Q212))).